A 421-amino-acid polypeptide reads, in one-letter code: Gamma-glutamyl phosphate reductase (421 aa).

Belongs to the gamma-glutamyl phosphate reductase family.

Its subcellular location is the cytoplasm. The catalysed reaction is L-glutamate 5-semialdehyde + phosphate + NADP(+) = L-glutamyl 5-phosphate + NADPH + H(+). Its pathway is amino-acid biosynthesis; L-proline biosynthesis; L-glutamate 5-semialdehyde from L-glutamate: step 2/2. Catalyzes the NADPH-dependent reduction of L-glutamate 5-phosphate into L-glutamate 5-semialdehyde and phosphate. The product spontaneously undergoes cyclization to form 1-pyrroline-5-carboxylate. This chain is Gamma-glutamyl phosphate reductase, found in Stutzerimonas stutzeri (strain A1501) (Pseudomonas stutzeri).